The following is a 665-amino-acid chain: Cinnamate reductase (665 aa).

Residue Gln109 participates in FMN binding. The active-site Proton donor is the Tyr182. FMN contacts are provided by residues Arg230, Arg319, and 341–342 (GR). [4Fe-4S] cluster is bound by residues Cys365, Cys368, Cys372, and Cys384. FAD contacts are provided by Ala415, Glu434, Asn442, Lys452, and Ala479.

In the N-terminal section; belongs to the NADH:flavin oxidoreductase/NADH oxidase family. The cofactor is FMN. FAD is required as a cofactor. Requires [4Fe-4S] cluster as cofactor.

The enzyme catalyses 3-phenylpropanoate + NAD(+) = (E)-cinnamate + NADH + H(+). It participates in amino-acid degradation; L-phenylalanine degradation. Involved in the fermentation of L-phenylalanine via a Stickland reaction. Catalyzes the reduction of (E)-cinnamate to yield 3-phenylpropionate. This chain is Cinnamate reductase, found in Clostridium sporogenes (strain ATCC 7955 / DSM 767 / NBRC 16411 / NCIMB 8053 / NCTC 8594 / PA 3679).